A 1206-amino-acid chain; its full sequence is Pre-mRNA-splicing factor prp12 (1206 aa).

Belongs to the RSE1 family. Belongs to the 40S cdc5-associated complex (or cwf complex), a spliceosome sub-complex reminiscent of a late-stage spliceosome composed of the U2, U5 and U6 snRNAs and at least brr2, cdc5, cwf2/prp3, cwf3/syf1, cwf4/syf3, cwf5/ecm2, spp42/cwf6, cwf7/spf27, cwf8, cwf9, cwf10, cwf11, cwf12, prp45/cwf13, cwf14, cwf15, cwf16, cwf17, cwf18, cwf19, cwf20, cwf21, cwf22, cwf23, cwf24, cwf25, cwf26, cyp7/cwf27, cwf28, cwf29/ist3, lea1, msl1, prp5/cwf1, prp10, prp12/sap130, prp17, prp22, sap61, sap62, sap114, sap145, slu7, smb1, smd1, smd3, smf1, smg1 and syf2.

It is found in the nucleus. Involved in mRNA splicing and G2/M transition. This Schizosaccharomyces pombe (strain 972 / ATCC 24843) (Fission yeast) protein is Pre-mRNA-splicing factor prp12 (prp12).